Reading from the N-terminus, the 85-residue chain is Large ribosomal subunit protein bL27 (85 aa).

Belongs to the bacterial ribosomal protein bL27 family.

In Variovorax paradoxus (strain S110), this protein is Large ribosomal subunit protein bL27.